A 586-amino-acid polypeptide reads, in one-letter code: Axin-like protein pry-1 (586 aa).

The tract at residues 1–135 is required for interaction with apr-1; it reads METHLGWARS…FIEAFNKMSS (135 aa). Residues 10-131 form the RGS domain; sequence SLEAVLSDRS…GSEEFIEAFN (122 aa). 3 disordered regions span residues 137–168, 344–442, and 478–501; these read TADQLPGGSAHHSSHQNTMRRSSGTTSRKSAA, MTDD…DSFA, and TSSLDYKDRRQHRKAPTPKKHSKI. 2 stretches are compositionally biased toward polar residues: residues 151-168 and 368-388; these read HQNTMRRSSGTTSRKSAA and GEGSKNTTLSPTNRAPAQLHN. Positions 421 to 442 are enriched in low complexity; sequence SQSMCAPSYSSASSSYSRDSFA. Basic residues predominate over residues 486-501; the sequence is RRQHRKAPTPKKHSKI. Residues 505–586 form the DIX domain; the sequence is LSNLITISYL…FEGRIAAELR (82 aa).

As to quaternary structure, interacts (via N-terminus) with apr-1 (via C-terminus). Interacts with bar-1 (via ARM repeats), gsk-3, and mig-5. Expressed in hypodermal cells (seam cells) V5 and V6, Q neuroblasts, ventral hypodermal cells P7/8 to P11/12, body wall muscle cells and neurons in the head, the tail and the ventral nerve cord.

It localises to the cell membrane. The protein localises to the nucleus. Its subcellular location is the cytoplasm. The protein resides in the cell cortex. Functionally, works in parallel with axl-1 in negatively regulating bar-1 signaling in vulval precursor cells and Q neuroblasts. Inhibits Wnt signaling, which affects tissue specific expression of Hox genes, egl-5, lin-39 and mab-5. This in turn affects QR (postembryonic neuroblast) cell migration, vulval cell fate specification, and the development of sensory structures by the seam cell lineage. Has a role in alae V cell patterning, ray formation in the male tail and axon guidance. Does not affect B cell polarity. The sequence is that of Axin-like protein pry-1 from Caenorhabditis elegans.